A 152-amino-acid chain; its full sequence is ESAT-6 secretion machinery protein EssA (152 aa).

At 1–114 (MLMNSVIALT…PYIQNKQEKK (114 aa)) the chain is on the cytoplasmic side. A helical transmembrane segment spans residues 115-135 (IFPYILMSVGAFLTLGFVIFS). Topologically, residues 136-152 (IHKGRRTKNESARKSNI) are extracellular.

This sequence belongs to the EssA family.

It is found in the cell membrane. In terms of biological role, component of the ESAT-6 secretion system (Ess). Required for the secretion of EsxA and EsxB. The chain is ESAT-6 secretion machinery protein EssA from Staphylococcus aureus (strain Mu50 / ATCC 700699).